The following is a 334-amino-acid chain: MIEADRLISAAVINDEESIDRAIRPKLLTEYVGQPHVREQMEIFIQAAKQRGDALDHVLIFGPPGLGKTTLANIIANEMGVNLRTTSGPVLEKAGDLAAMLTNLEPHDVLFIDEIHRLSPVVEEILYPAMEDYQLDIMIGEGPAARSIKLDLPPFTLIGATTRAGSLTSPLRDRFGIVQRLEFYQVADLEHIVSRSAKCLGLELTPEGAHQLARRSRGTPRITNRLLRRVRDFAEVRADGAINGEVAMKALDMLNVDAEGFDFMDRKLLLAVIDKFMGGPVGLDNLAAAIGEERETIEDVLEPYLIQQGFIQRTPRGRIATNHAYKHFGITREE.

The segment at 4–184 is large ATPase domain (RuvB-L); sequence ADRLISAAVI…FGIVQRLEFY (181 aa). ATP contacts are provided by residues I23, R24, G65, K68, T69, T70, 131-133, R174, Y184, and R221; that span reads EDY. T69 lines the Mg(2+) pocket. Positions 185–255 are small ATPAse domain (RuvB-S); the sequence is QVADLEHIVS…VAMKALDMLN (71 aa). Positions 258-334 are head domain (RuvB-H); it reads AEGFDFMDRK…YKHFGITREE (77 aa). Residues R294, R313, and R318 each coordinate DNA.

Belongs to the RuvB family. In terms of assembly, homohexamer. Forms an RuvA(8)-RuvB(12)-Holliday junction (HJ) complex. HJ DNA is sandwiched between 2 RuvA tetramers; dsDNA enters through RuvA and exits via RuvB. An RuvB hexamer assembles on each DNA strand where it exits the tetramer. Each RuvB hexamer is contacted by two RuvA subunits (via domain III) on 2 adjacent RuvB subunits; this complex drives branch migration. In the full resolvosome a probable DNA-RuvA(4)-RuvB(12)-RuvC(2) complex forms which resolves the HJ.

The protein resides in the cytoplasm. The catalysed reaction is ATP + H2O = ADP + phosphate + H(+). Its function is as follows. The RuvA-RuvB-RuvC complex processes Holliday junction (HJ) DNA during genetic recombination and DNA repair, while the RuvA-RuvB complex plays an important role in the rescue of blocked DNA replication forks via replication fork reversal (RFR). RuvA specifically binds to HJ cruciform DNA, conferring on it an open structure. The RuvB hexamer acts as an ATP-dependent pump, pulling dsDNA into and through the RuvAB complex. RuvB forms 2 homohexamers on either side of HJ DNA bound by 1 or 2 RuvA tetramers; 4 subunits per hexamer contact DNA at a time. Coordinated motions by a converter formed by DNA-disengaged RuvB subunits stimulates ATP hydrolysis and nucleotide exchange. Immobilization of the converter enables RuvB to convert the ATP-contained energy into a lever motion, pulling 2 nucleotides of DNA out of the RuvA tetramer per ATP hydrolyzed, thus driving DNA branch migration. The RuvB motors rotate together with the DNA substrate, which together with the progressing nucleotide cycle form the mechanistic basis for DNA recombination by continuous HJ branch migration. Branch migration allows RuvC to scan DNA until it finds its consensus sequence, where it cleaves and resolves cruciform DNA. In Yersinia pseudotuberculosis serotype O:1b (strain IP 31758), this protein is Holliday junction branch migration complex subunit RuvB.